The following is an 85-amino-acid chain: MKVTLIAILTCAAVLVLHTTAAEELEAESQLMEVGMPDTELAAVDEERLFECSVSCEIEKEGNKDYKKKKCKGGWKYKFNMCVKV.

The signal sequence occupies residues 1 to 22 (MKVTLIAILTCAAVLVLHTTAA). Positions 23-48 (EELEAESQLMEVGMPDTELAAVDEER) are excised as a propeptide. An intrachain disulfide couples C71 to C82.

Belongs to the neurotoxin 12 (Hwtx-2) family. 02 (Hwtx-2) subfamily. Expressed by the venom gland.

The protein localises to the secreted. Postsynaptic neurotoxin. This is U4-theraphotoxin-Hhn1f from Cyriopagopus hainanus (Chinese bird spider).